The primary structure comprises 391 residues: Pectate lyase B (391 aa).

The N-terminal stretch at 1-30 (MKKTVRSLCSTALALTLGFTLLSGPASVQA) is a signal peptide. Residues Asp-181, Asp-203, and Asp-207 each coordinate Ca(2+). The active site involves Arg-305.

Belongs to the polysaccharide lyase 1 family. Requires Ca(2+) as cofactor.

The protein resides in the secreted. It catalyses the reaction Eliminative cleavage of (1-&gt;4)-alpha-D-galacturonan to give oligosaccharides with 4-deoxy-alpha-D-galact-4-enuronosyl groups at their non-reducing ends.. It carries out the reaction Eliminative cleavage of (1-&gt;4)-alpha-D-galacturonan methyl ester to give oligosaccharides with 4-deoxy-6-O-methyl-alpha-D-galact-4-enuronosyl groups at their non-reducing ends.. It functions in the pathway glycan metabolism; pectin degradation. Catalyzes the depolymerization of both polygalacturonate and pectins of various methyl esterification degree, with an endo mode of action. Shows the highest activity on 20 to 34% methylated pectin but retains 67%, 51%, 25%, and 1% of its maximum activity on polygalacturonate and 8.5%, 55 to 70%, and 90% methylated pectin, respectively. This chain is Pectate lyase B, found in Paenibacillus amylolyticus.